The following is a 414-amino-acid chain: ORC1-type DNA replication protein 1 (414 aa).

Residues 70–74 (TGKTA), Tyr-213, and Arg-225 contribute to the ATP site.

This sequence belongs to the CDC6/cdc18 family.

Involved in regulation of DNA replication. This chain is ORC1-type DNA replication protein 1 (cdc6-1), found in Methanosarcina acetivorans (strain ATCC 35395 / DSM 2834 / JCM 12185 / C2A).